Here is a 391-residue protein sequence, read N- to C-terminus: Phosphoglycerate kinase (391 aa).

Substrate contacts are provided by residues 21–23, Arg36, 59–62, Arg114, and Arg147; these read DLN and HLGR. ATP is bound by residues Lys198, Glu315, and 344 to 347; that span reads GGDT.

It belongs to the phosphoglycerate kinase family. As to quaternary structure, monomer.

Its subcellular location is the cytoplasm. The enzyme catalyses (2R)-3-phosphoglycerate + ATP = (2R)-3-phospho-glyceroyl phosphate + ADP. It functions in the pathway carbohydrate degradation; glycolysis; pyruvate from D-glyceraldehyde 3-phosphate: step 2/5. The protein is Phosphoglycerate kinase of Actinobacillus pleuropneumoniae serotype 5b (strain L20).